The primary structure comprises 205 residues: MQPRRIARELALLSIGQLPSNSDRLANQDLQAVMITAVRTLVAEVQEALETASAELKRGSDRILDSELKAIDVQSSRAMVTEAIDLTKTAVNRLGLAIDFPEFIQLANQQSVRDYTLDLIGAVHHHRDEIDQILETSLVDWQLHRLAHIDANLLRLAVAEMKYLDIPNQVAINESVELAKKYSAEEGHRFINGVLRRVTRQIAVP.

It belongs to the NusB family.

Its function is as follows. Involved in transcription antitermination. Required for transcription of ribosomal RNA (rRNA) genes. Binds specifically to the boxA antiterminator sequence of the ribosomal RNA (rrn) operons. This Acaryochloris marina (strain MBIC 11017) protein is Transcription antitermination protein NusB.